A 721-amino-acid polypeptide reads, in one-letter code: Mitogen-activated protein kinase 6 (721 aa).

Met-1 is covalently cross-linked (Peptide (Met-Gly) (interchain with G-Cter in ubiquitin)). A Protein kinase domain is found at 20–316 (YMDLKPLGCG…AEEALSHPYM (297 aa)). ATP is bound by residues 26–34 (LGCGGNGLV) and Lys-49. Residue Asp-152 is the Proton acceptor of the active site. At Ser-189 the chain carries Phosphoserine; by PAK1, PAK2 and PAK3. Residues 189–191 (SEG) carry the SEG motif motif. Residues 332 to 337 (FHIEDE) carry the FRIEDE motif motif. Phosphoserine occurs at positions 386, 452, 556, 558, 665, and 684. Over residues 701-715 (AMKSSPQIPHQTYSS) the composition is skewed to polar residues. The interval 701-721 (AMKSSPQIPHQTYSSILKHLN) is disordered.

The protein belongs to the protein kinase superfamily. CMGC Ser/Thr protein kinase family. MAP kinase subfamily. Heterodimer with ERK4/MAPK4. Interacts with (via FRIEDE motif) MAPKAPK5. Interacts with UBE3A; this interaction may be indirect and mediated by HERC2, possibly via HERC2 interaction with NEURL4. Mg(2+) is required as a cofactor. Phosphorylated at Ser-189 by PAK1, PAK2 and PAK3 resulting in catalytic activation. Phosphorylated by MAPKAPK5 at other sites. Post-translationally, ubiquitination at Met-1 leads to degradation by the proteasome pathway.

It is found in the cytoplasm. Its subcellular location is the nucleus. It carries out the reaction L-seryl-[protein] + ATP = O-phospho-L-seryl-[protein] + ADP + H(+). It catalyses the reaction L-threonyl-[protein] + ATP = O-phospho-L-threonyl-[protein] + ADP + H(+). Its activity is regulated as follows. Activated by phosphorylation at Ser-189. Atypical MAPK protein. Phosphorylates microtubule-associated protein 2 (MAP2) and MAPKAPK5. The precise role of the complex formed with MAPKAPK5 is still unclear, but the complex follows a complex set of phosphorylation events: upon interaction with atypical MAPKAPK5, ERK3/MAPK6 is phosphorylated at Ser-189 and then mediates phosphorylation and activation of MAPKAPK5, which in turn phosphorylates ERK3/MAPK6. May promote entry in the cell cycle. This Pongo abelii (Sumatran orangutan) protein is Mitogen-activated protein kinase 6 (MAPK6).